The chain runs to 145 residues: Large ribosomal subunit protein uL15 (145 aa).

The tract at residues 1–58 (MFSLLKPKGAAKRRKIVGRGPGSGLGKTSGRGQKGQKARNTSPRLGFEGGQTPLYRRL) is disordered. Residues 19-33 (RGPGSGLGKTSGRGQ) are compositionally biased toward gly residues.

The protein belongs to the universal ribosomal protein uL15 family. Part of the 50S ribosomal subunit.

Its function is as follows. Binds to the 23S rRNA. In Borreliella afzelii (strain PKo) (Borrelia afzelii), this protein is Large ribosomal subunit protein uL15.